A 67-amino-acid chain; its full sequence is Large ribosomal subunit protein bL35 (67 aa).

It belongs to the bacterial ribosomal protein bL35 family.

The chain is Large ribosomal subunit protein bL35 from Leptospira borgpetersenii serovar Hardjo-bovis (strain JB197).